The sequence spans 516 residues: Histidine ammonia-lyase (516 aa).

The 5-imidazolinone (Ala-Gly) cross-link spans 143–145 (ASG). Ser-144 carries the post-translational modification 2,3-didehydroalanine (Ser).

This sequence belongs to the PAL/histidase family. In terms of processing, contains an active site 4-methylidene-imidazol-5-one (MIO), which is formed autocatalytically by cyclization and dehydration of residues Ala-Ser-Gly.

It localises to the cytoplasm. The catalysed reaction is L-histidine = trans-urocanate + NH4(+). It participates in amino-acid degradation; L-histidine degradation into L-glutamate; N-formimidoyl-L-glutamate from L-histidine: step 1/3. This is Histidine ammonia-lyase from Koribacter versatilis (strain Ellin345).